A 477-amino-acid polypeptide reads, in one-letter code: Argininosuccinate lyase (477 aa).

Belongs to the lyase 1 family. Argininosuccinate lyase subfamily.

It is found in the cytoplasm. The catalysed reaction is 2-(N(omega)-L-arginino)succinate = fumarate + L-arginine. The protein operates within amino-acid biosynthesis; L-arginine biosynthesis; L-arginine from L-ornithine and carbamoyl phosphate: step 3/3. The sequence is that of Argininosuccinate lyase from Corynebacterium glutamicum (strain R).